The chain runs to 449 residues: Acetolactate synthase small subunit 1, chloroplastic (449 aa).

A chloroplast-targeting transit peptide spans 1–30 (MEHIQTRTTLSQLSTLPSDKRLGAIRFKCL). ACT domains follow at residues 31–98 (LVMK…DLSK) and 259–333 (TLSM…DITH).

This sequence belongs to the acetolactate synthase small subunit family. As to quaternary structure, the acetolactate synthase complex contains both large catalytic subunits and small regulatory subunits.

Its subcellular location is the plastid. It localises to the chloroplast. The protein operates within amino-acid biosynthesis; L-isoleucine biosynthesis; L-isoleucine from 2-oxobutanoate: step 1/4. Its pathway is amino-acid biosynthesis; L-valine biosynthesis; L-valine from pyruvate: step 1/4. Its function is as follows. Regulatory subunit of acetohydroxy-acid synthase. Probably involved in feedback inhibition by branched-chain amino acids. Not involved in herbicide tolerance. The sequence is that of Acetolactate synthase small subunit 1, chloroplastic from Nicotiana plumbaginifolia (Leadwort-leaved tobacco).